Reading from the N-terminus, the 468-residue chain is 3-isopropylmalate dehydratase large subunit (468 aa).

3 residues coordinate [4Fe-4S] cluster: C346, C406, and C409.

It belongs to the aconitase/IPM isomerase family. LeuC type 1 subfamily. As to quaternary structure, heterodimer of LeuC and LeuD. [4Fe-4S] cluster is required as a cofactor.

It catalyses the reaction (2R,3S)-3-isopropylmalate = (2S)-2-isopropylmalate. It functions in the pathway amino-acid biosynthesis; L-leucine biosynthesis; L-leucine from 3-methyl-2-oxobutanoate: step 2/4. In terms of biological role, catalyzes the isomerization between 2-isopropylmalate and 3-isopropylmalate, via the formation of 2-isopropylmaleate. This is 3-isopropylmalate dehydratase large subunit from Cyanothece sp. (strain PCC 7425 / ATCC 29141).